The following is a 395-amino-acid chain: MRN complex-interacting protein (395 aa).

Residues 90–100 are compositionally biased toward basic and acidic residues; it reads DPKSEQEEAHV. Disordered regions lie at residues 90–155 and 180–275; these read DPKS…GGNC and KRSS…FGES. A compositionally biased stretch (polar residues) spans 104 to 113; sequence SKYTDQTTEG. A compositionally biased stretch (acidic residues) spans 117 to 127; it reads EKDDEDEDENV. Residues 142 to 145 carry the Nuclear localization signal (NLS) motif; that stretch reads RKKM. The span at 183 to 195 shows a compositional bias: low complexity; it reads SSSWNKGSVSKYS. Composition is skewed to polar residues over residues 224-244 and 260-270; these read ACSS…QIKS and QSESPSVSSHQ.

The protein belongs to the MRNIP family.

The protein resides in the nucleus. Its subcellular location is the nucleoplasm. Its function is as follows. Plays a role in the cellular response to DNA damage and the maintenance of genome stability through its association with the MRN damage-sensing complex. Promotes chromatin loading and activity of the MRN complex to facilitate subsequent ATM-mediated DNA damage response signaling and DNA repair. In Danio rerio (Zebrafish), this protein is MRN complex-interacting protein.